The chain runs to 187 residues: Large ribosomal subunit protein uL22 (187 aa).

It belongs to the universal ribosomal protein uL22 family.

In Theileria parva (East coast fever infection agent), this protein is Large ribosomal subunit protein uL22 (RPL17).